The sequence spans 485 residues: MNAPVNLSSDAHKAVMNDVLQRQKAAHLRDGPPSAEKRIQWLNRCIDLLVGHQAEIAKAVNQDFGSRSPEATSLTDVAGSIGPLKHAREHLTKWMKPEKHKTTPAILGLFGAKATVQWQPKGVVGVISPWNFPVNLTFAPLAGVFAAGNRAMIKPSEFTPATSDLLKAMFAKAFNEEEVAVFVGGPEVGQAFSGLAFDHLVFTGATSVAKHVMRAAAENLVPVTLELGGKSPVILSRGADMATAAARVMNGKTLNAGQICLAPDYVLAPQEDVEAFVKEAQAAVSRYFPTIKDNPDYTAVVAQRHYDRVKGYVDDARAKGARVIEINPAGEDLSQQEHRKIPPTLILDPTDDMKVMQEEIFGPVLPVKGYKTVDEAVDYVNAHDRPLALYWFGTDEAEKDRVLERTTSGGVTVNDVIFHVAQENLPFGGIGPAGMGAYHGYDGFREFSHRKAVFQQLKKDIAPMLGLRPPYGEGIRKYLAGQIKK.

Catalysis depends on residues glutamate 226 and cysteine 260.

It belongs to the aldehyde dehydrogenase family.

It carries out the reaction (E)-coniferaldehyde + NADP(+) + H2O = (E)-ferulate + NADPH + 2 H(+). It catalyses the reaction (E)-coniferaldehyde + NAD(+) + H2O = (E)-ferulate + NADH + 2 H(+). The polypeptide is Probable coniferyl aldehyde dehydrogenase (calB) (Caulobacter vibrioides (strain ATCC 19089 / CIP 103742 / CB 15) (Caulobacter crescentus)).